Reading from the N-terminus, the 470-residue chain is N amino acid transport system protein (470 aa).

A compositionally biased stretch (basic and acidic residues) spans Met-1–Asp-11. The disordered stretch occupies residues Met-1–Ser-21. Topologically, residues Met-1–Lys-56 are extracellular. 2 consecutive transmembrane segments (helical) span residues Arg-57 to Ala-77 and Phe-78 to Ile-98. Over Tyr-99–Glu-131 the chain is Extracellular. A helical membrane pass occupies residues Ile-132–Gly-152. Residues Thr-153–Ser-168 lie on the Cytoplasmic side of the membrane. A run of 2 helical transmembrane segments spans residues Leu-169–Ala-189 and Val-191–Ile-211. Topologically, residues Ala-212–Asp-236 are cytoplasmic. The chain crosses the membrane as a helical span at residues Leu-237–Met-257. At Cys-258–Ser-275 the chain is on the extracellular side. A helical transmembrane segment spans residues Ile-276–Ala-296. Over Phe-297–Lys-316 the chain is Cytoplasmic. A helical membrane pass occupies residues Val-317–Val-337. The Extracellular segment spans residues Ser-338–Pro-357. Residues Ala-358–Ala-378 form a helical membrane-spanning segment. The Cytoplasmic portion of the chain corresponds to Glu-379–Asp-386. Residues Leu-387–Met-407 traverse the membrane as a helical segment. The Extracellular segment spans residues Tyr-408–Ala-427. Residues Leu-428–Ile-448 form a helical membrane-spanning segment. Residues Gln-449 to Ala-470 are Cytoplasmic-facing.

This sequence belongs to the amino acid/polyamine transporter 2 family.

The protein resides in the membrane. Its function is as follows. Required for the transport of neutral aliphatic and aromatic amino acids via the N system. This Neurospora crassa (strain ATCC 24698 / 74-OR23-1A / CBS 708.71 / DSM 1257 / FGSC 987) protein is N amino acid transport system protein (mtr).